A 227-amino-acid polypeptide reads, in one-letter code: Urease accessory protein UreF (227 aa).

It belongs to the UreF family. In terms of assembly, ureD, UreF and UreG form a complex that acts as a GTP-hydrolysis-dependent molecular chaperone, activating the urease apoprotein by helping to assemble the nickel containing metallocenter of UreC. The UreE protein probably delivers the nickel.

Its subcellular location is the cytoplasm. Required for maturation of urease via the functional incorporation of the urease nickel metallocenter. In Shewanella halifaxensis (strain HAW-EB4), this protein is Urease accessory protein UreF.